The sequence spans 201 residues: Superoxide dismutase [Mn] (201 aa).

Mn(2+) is bound by residues His27, His81, Asp163, and His167.

Belongs to the iron/manganese superoxide dismutase family. In terms of assembly, homodimer. Requires Mn(2+) as cofactor.

The enzyme catalyses 2 superoxide + 2 H(+) = H2O2 + O2. In terms of biological role, destroys superoxide anion radicals which are normally produced within the cells and which are toxic to biological systems. May play a critical role against oxidative stress, affecting both the survival and the virulence of S.pneumoniae. This Streptococcus pneumoniae serotype 4 (strain ATCC BAA-334 / TIGR4) protein is Superoxide dismutase [Mn] (sodA).